A 156-amino-acid chain; its full sequence is Arginine repressor (156 aa).

The protein belongs to the ArgR family.

The protein resides in the cytoplasm. Its pathway is amino-acid biosynthesis; L-arginine biosynthesis [regulation]. Functionally, regulates arginine biosynthesis genes. This Escherichia coli O81 (strain ED1a) protein is Arginine repressor.